A 512-amino-acid polypeptide reads, in one-letter code: NAD(P)H-quinone oxidoreductase subunit 2, organellar chromatophore (512 aa).

14 helical membrane passes run 6-26, 43-63, 80-100, 107-127, 133-153, 168-188, 210-230, 242-262, 276-296, 304-324, 332-352, 376-396, 411-431, and 464-484; these read LLAL…LLAL, WVPP…ASQW, LAIA…MISW, GAPM…AMFL, LVSI…LAGY, LLVG…LYGL, AALA…AVPF, PTPI…ALAL, WKFL…IVAL, MLAY…VCGT, ILYL…VILF, IGLS…GFFG, LLVV…ISVI, and VALL…NPLF.

Belongs to the complex I subunit 2 family. In terms of assembly, NDH-1 can be composed of about 15 different subunits; different subcomplexes with different compositions have been identified which probably have different functions.

It is found in the plastid. It localises to the organellar chromatophore thylakoid membrane. It carries out the reaction a plastoquinone + NADH + (n+1) H(+)(in) = a plastoquinol + NAD(+) + n H(+)(out). The catalysed reaction is a plastoquinone + NADPH + (n+1) H(+)(in) = a plastoquinol + NADP(+) + n H(+)(out). Functionally, NDH-1 shuttles electrons from an unknown electron donor, via FMN and iron-sulfur (Fe-S) centers, to quinones in the respiratory and/or the photosynthetic chain. The immediate electron acceptor for the enzyme in this species is believed to be plastoquinone. Couples the redox reaction to proton translocation, and thus conserves the redox energy in a proton gradient. Cyanobacterial NDH-1 also plays a role in inorganic carbon-concentration. This Paulinella chromatophora protein is NAD(P)H-quinone oxidoreductase subunit 2, organellar chromatophore.